The following is a 323-amino-acid chain: DNA-directed RNA polymerase subunit alpha (323 aa).

The segment at 1–233 (MGQEKVTVST…DLFIPFFHAE (233 aa)) is alpha N-terminal domain (alpha-NTD). The tract at residues 264–323 (IALKYIYIDQSELPPRVYNCLKRSNINTFLELLNNSQEELMKIQDFRIEDVKHILDVLEI) is alpha C-terminal domain (alpha-CTD).

The protein belongs to the RNA polymerase alpha chain family. In plastids the minimal PEP RNA polymerase catalytic core is composed of four subunits: alpha, beta, beta', and beta''. When a (nuclear-encoded) sigma factor is associated with the core the holoenzyme is formed, which can initiate transcription.

Its subcellular location is the plastid. The protein resides in the chloroplast. It carries out the reaction RNA(n) + a ribonucleoside 5'-triphosphate = RNA(n+1) + diphosphate. Its function is as follows. DNA-dependent RNA polymerase catalyzes the transcription of DNA into RNA using the four ribonucleoside triphosphates as substrates. This Morus indica (Mulberry) protein is DNA-directed RNA polymerase subunit alpha.